The following is a 104-amino-acid chain: Synaptic plasticity regulator PANTS (104 aa).

The segment at 58–104 (RRSAEAQADSLPPGPEGEPRVAGAGPNAVTGILTRNQGTERPHGDTR) is disordered. Residues 95-104 (GTERPHGDTR) show a composition bias toward basic and acidic residues.

This sequence belongs to the UPF0545 family. As to quaternary structure, interacts with RTN4 isoform A/Nogo-A; the interaction results in enhanced RTN4-mediated inhibition of AMPA receptor clustering. Also interacts with NCAM1, RANBP2 and CCT8. Rapidly degraded by proteolysis following neuronal stimulation, resulting in increased AMPA receptor clustering.

The protein localises to the synapse. The protein resides in the synaptic cleft. Its function is as follows. Negatively regulates long-term potentiation and modulates adult synaptic plasticity. Stabilizes the interaction of RTN4 isoform A/Nogo-A with its receptors, inhibiting clustering of postsynaptic AMPA receptors at synaptic sites. Upon neuronal stimulation, degraded at synapses, reducing RTN4 signaling and allowing AMPA receptor clustering at individual synapses. This chain is Synaptic plasticity regulator PANTS, found in Bos taurus (Bovine).